A 540-amino-acid polypeptide reads, in one-letter code: Probable G-protein coupled receptor 75 (540 aa).

The Extracellular segment spans residues 1 to 46 (MNTSAPLQNVPNATLLNMPPLHGGNSTSLQEGLRDFIHTATLVTCT). 2 N-linked (GlcNAc...) asparagine glycosylation sites follow: Asn2 and Asn25. Residues 47 to 67 (FLLAIIFCLGSYGNFIVFLSF) form a helical membrane-spanning segment. The Cytoplasmic segment spans residues 68–86 (FDPSFRKFRTNFDFMILNL). The helical transmembrane segment at 87–107 (SFCDLFICGVTAPMFTFVLFF) threads the bilayer. The Extracellular segment spans residues 108-120 (SSASSIPDSFCFT). Residues 121–141 (FHLTSSGFVIMSLKMVAVIAL) form a helical membrane-spanning segment. Topologically, residues 142–160 (HRLRMVMGKQPNCTASFSC) are cytoplasmic. The helical transmembrane segment at 161 to 181 (ILLLTLLLWATSFTLATLATL) threads the bilayer. The Extracellular portion of the chain corresponds to 182–205 (RTNKSHLCLPMSSLMDGEGKAILS). A glycan (N-linked (GlcNAc...) asparagine) is linked at Asn184. A helical membrane pass occupies residues 206 to 226 (LYVVDFTFCVAVVSVSYIMIA). Residues 227–318 (QTLRKNAQVK…INFSTAKDSK (92 aa)) lie on the Cytoplasmic side of the membrane. A helical membrane pass occupies residues 319-339 (AVVTCVVIVLSVLVCCLPLGI). The Extracellular segment spans residues 340–350 (SLVQMVLSDNG). Residues 351-371 (SFILYQFELFGFTLIFFKSGL) form a helical membrane-spanning segment. The Cytoplasmic segment spans residues 372 to 540 (NPFIYSRNSA…SAKQIPIPSV (169 aa)). The segment at 443 to 475 (DQACGPSHSKESAASPKVSAGHQPCGQSSSTPI) is disordered.

The protein belongs to the G-protein coupled receptor 1 family. As to expression, highly expressed in brain and heart. Also detected in skeletal muscle, liver and kidney. Also expressed by islet cells (at protein level).

It is found in the cell membrane. Functionally, g protein-coupled receptor that is activated by the chemokine CCL5/RANTES. Probably coupled to heterotrimeric Gq proteins, it stimulates inositol trisphosphate production and calcium mobilization upon activation. Together with CCL5/RANTES, may play a role in neuron survival through activation of a downstream signaling pathway involving the PI3, Akt and MAP kinases. CCL5/RANTES may also regulate insulin secretion by pancreatic islet cells through activation of this receptor. This chain is Probable G-protein coupled receptor 75 (Gpr75), found in Mus musculus (Mouse).